The sequence spans 912 residues: Alpha-actinin-4 (912 aa).

An actin-binding region spans residues 1-267; the sequence is MVDYHAANQA…IMTYVSSFYH (267 aa). An interaction with VCL region spans residues 12–27; that stretch reads QYGPNSGGGNGAGGGG. The interval 12 to 31 is disordered; it reads QYGPNSGGGNGAGGGGSMGD. The segment covering 16-29 has biased composition (gly residues); it reads NSGGGNGAGGGGSM. Tyr32 carries the phosphotyrosine modification. The interval 41–62 is interaction with VCL; it reads RDLLLDPAWEKQQRKTFTAWCN. 2 Calponin-homology (CH) domains span residues 51–155 and 164–270; these read KQQR…LRFA and TSAK…HAFS. Positions 85–89 match the LXXLL motif motif; the sequence is LMLLL. The tract at residues 109-127 is interaction with VCL; that stretch reads KINNVNKALDFIASKGVKL. Position 115 is an N6-acetyllysine (Lys115). The polyphosphoinositide (PIP2)-binding stretch occupies residues 178-193; the sequence is TAPYKNVNVQNFHISW. Lys215 is modified (N6-acetyllysine). A Phosphothreonine modification is found at Thr250. Spectrin repeat units follow at residues 294 to 404, 414 to 519, 529 to 640, and 650 to 753; these read HLME…WLLN, HLAE…ALEK, QLHL…ALLE, and HLRR…EVEN. An N6-acetyllysine mark is found at Lys593 and Lys626. The residue at position 697 (Ser697) is a Phosphoserine. The mediates interaction with MICALL2 stretch occupies residues 737–912; it reads WEQLLTTIAR…STALYGESDL (176 aa). EF-hand domains lie at 766–801 and 807–842; these read EQMQ…LGYD and QGDA…ETTD. Asp779 provides a ligand contact to Ca(2+). Residue Lys780 is modified to N6-acetyllysine. 2 residues coordinate Ca(2+): Asp781 and Glu790. Position 860 is an N6-acetyllysine (Lys860). Residue Ser910 is modified to Phosphoserine.

It belongs to the alpha-actinin family. Homodimer; antiparallel. Interacts with MAGI1. Interacts with PDLIM2. Identified in a complex with CASK, IQGAP1, MAGI2, NPHS1, SPTAN1 and SPTBN1. Identified in a IGF2BP1-dependent mRNP granule complex containing untranslated mRNAs. Component of the CART complex, at least composed of ACTN4, HGS/HRS, MYO5B and TRIM3. Binds TRIM3 at the N-terminus. Interacts with MICALL2 (preferentially in opened conformation); stimulated by RAB13 activation. Interacts with PPARG and RARA. Binds to VCL; this interaction triggers VCL conformational changes. Interacts with SEPTIN14. Interacts with IGSF8.

It is found in the nucleus. It localises to the cytoplasm. The protein localises to the cell junction. The protein resides in the cytoskeleton. Its subcellular location is the stress fiber. It is found in the perinuclear region. Functionally, F-actin cross-linking protein which is thought to anchor actin to a variety of intracellular structures. This is a bundling protein. Probably involved in vesicular trafficking via its association with the CART complex. The CART complex is necessary for efficient transferrin receptor recycling but not for EGFR degradation. Involved in tight junction assembly in epithelial cells probably through interaction with MICALL2. Links MICALL2 to the actin cytoskeleton and recruits it to the tight junctions. May also function as a transcriptional coactivator, stimulating transcription mediated by the nuclear hormone receptors PPARG and RARA. Association with IGSF8 regulates the immune synapse formation and is required for efficient T-cell activation. In Mus musculus (Mouse), this protein is Alpha-actinin-4.